The chain runs to 180 residues: Large ribosomal subunit protein uL6 (180 aa).

Belongs to the universal ribosomal protein uL6 family. In terms of assembly, part of the 50S ribosomal subunit.

Functionally, this protein binds to the 23S rRNA, and is important in its secondary structure. It is located near the subunit interface in the base of the L7/L12 stalk, and near the tRNA binding site of the peptidyltransferase center. This Mycoplasma capricolum subsp. capricolum (strain California kid / ATCC 27343 / NCTC 10154) protein is Large ribosomal subunit protein uL6.